We begin with the raw amino-acid sequence, 61 residues long: Large ribosomal subunit protein bL28A (61 aa).

The protein belongs to the bacterial ribosomal protein bL28 family.

The sequence is that of Large ribosomal subunit protein bL28A (rpmB1) from Streptomyces coelicolor (strain ATCC BAA-471 / A3(2) / M145).